Consider the following 107-residue polypeptide: MDIETKKVIEQILDNNKIVLFMKGSKLMPMCGFSNTAIQILNTLNTDYFTYDILENENIRQAIKEHSSWPTIPQLYINREFVGGADIMLELFEQGELQAQVETLLAA.

Positions 6-107 constitute a Glutaredoxin domain; that stretch reads KKVIEQILDN…QAQVETLLAA (102 aa). Residue K23 coordinates glutathione. Position 31 (C31) interacts with [2Fe-2S] cluster. Glutathione contacts are provided by residues R60 and 85-86; that span reads AD.

Belongs to the glutaredoxin family. Monothiol subfamily.

It is found in the plastid. It localises to the chloroplast. This is an uncharacterized protein from Porphyra purpurea (Red seaweed).